The primary structure comprises 1331 residues: Contactin-associated protein-like 2 (1331 aa).

A signal peptide spans 1–27 (MLAAPRAGCGAALLLWIVSSCLCRAWT). The Extracellular portion of the chain corresponds to 28-1262 (APSTSQKCDE…IRNGVNRNSA (1235 aa)). One can recognise an F5/8 type C domain in the interval 35–181 (CDEPLVSGLP…IGLRIEVYGC (147 aa)). An intrachain disulfide couples Cys-35 to Cys-181. Laminin G-like domains follow at residues 187–368 (VINF…SFSC) and 373–552 (TVPV…IDMC). Asn-289, Asn-346, Asn-363, Asn-379, Asn-436, Asn-506, Asn-507, and Asn-546 each carry an N-linked (GlcNAc...) asparagine glycan. Cys-336 and Cys-368 are disulfide-bonded. Disulfide bonds link Cys-520-Cys-552, Cys-558-Cys-569, Cys-563-Cys-578, and Cys-580-Cys-590. Residues 554–591 (IIDRCVPNHCERGGKCSQTWDSFKCTCDETGYTGATCH) enclose the EGF-like 1 domain. In terms of domain architecture, Fibrinogen C-terminal spans 592 to 798 (NSIYEPSCEA…LRCQGDRNYW (207 aa)). N-linked (GlcNAc...) asparagine glycans are attached at residues Asn-630 and Asn-735. The Laminin G-like 3 domain maps to 799 to 963 (NAASFPNPSS…KVTSGFISGC (165 aa)). Intrachain disulfides connect Cys-936/Cys-963, Cys-967/Cys-980, Cys-974/Cys-989, and Cys-991/Cys-1001. An EGF-like 2 domain is found at 964-1002 (SGHCTSYGTNCENGGKCLERYHGYSCDCSNTAYDGTFCN). Residues 1023 to 1214 (ATNARDSSSR…IQGELVESNC (192 aa)) form the Laminin G-like 4 domain. Asn-1116 and Asn-1198 each carry an N-linked (GlcNAc...) asparagine glycan. The cysteines at positions 1178 and 1214 are disulfide-linked. Residues 1263-1283 (IIGGVIAVVIFTILCTLVFLI) form a helical membrane-spanning segment. Residues 1284 to 1331 (RYMFRHKGTYHTNEAKGAESAESADAAIMNNDPNFTETIDESKKEWLI) are Cytoplasmic-facing. Ser-1303 and Ser-1306 each carry phosphoserine.

This sequence belongs to the neurexin family. In terms of assembly, interacts (via C-terminus) with KCNA2.

It is found in the membrane. It localises to the cell projection. Its subcellular location is the axon. The protein resides in the cell junction. The protein localises to the paranodal septate junction. Its function is as follows. Required for gap junction formation. Required, with CNTNAP1, for radial and longitudinal organization of myelinated axons. Plays a role in the formation of functional distinct domains critical for saltatory conduction of nerve impulses in myelinated nerve fibers. Demarcates the juxtaparanodal region of the axo-glial junction. The protein is Contactin-associated protein-like 2 (CNTNAP2) of Pongo abelii (Sumatran orangutan).